The following is a 110-amino-acid chain: UPF0060 membrane protein RSp1275 (110 aa).

4 consecutive transmembrane segments (helical) span residues 8-28 (FLFA…WLVL), 33-53 (SAWL…LLTL), 63-83 (AAYG…VDGA), and 90-110 (IGGA…PQPT).

This sequence belongs to the UPF0060 family.

It is found in the cell inner membrane. This chain is UPF0060 membrane protein RSp1275, found in Ralstonia nicotianae (strain ATCC BAA-1114 / GMI1000) (Ralstonia solanacearum).